We begin with the raw amino-acid sequence, 310 residues long: Ribosomal RNA small subunit methyltransferase H (310 aa).

S-adenosyl-L-methionine is bound by residues 33 to 35, aspartate 52, phenylalanine 79, aspartate 98, and glutamine 105; that span reads GGH.

Belongs to the methyltransferase superfamily. RsmH family.

It is found in the cytoplasm. The enzyme catalyses cytidine(1402) in 16S rRNA + S-adenosyl-L-methionine = N(4)-methylcytidine(1402) in 16S rRNA + S-adenosyl-L-homocysteine + H(+). Its function is as follows. Specifically methylates the N4 position of cytidine in position 1402 (C1402) of 16S rRNA. The protein is Ribosomal RNA small subunit methyltransferase H of Campylobacter jejuni subsp. doylei (strain ATCC BAA-1458 / RM4099 / 269.97).